Here is a 376-residue protein sequence, read N- to C-terminus: Protein RecA (376 aa).

Position 66-73 (66-73 (GPESSGKT)) interacts with ATP. The interval 329–376 (VGVKPEDLTAEPGADAAGAAADAEAPAKSVPAPAAKSAKGSKAAAAKS) is disordered. Residues 338-376 (AEPGADAAGAAADAEAPAKSVPAPAAKSAKGSKAAAAKS) show a composition bias toward low complexity.

Belongs to the RecA family.

The protein localises to the cytoplasm. Functionally, can catalyze the hydrolysis of ATP in the presence of single-stranded DNA, the ATP-dependent uptake of single-stranded DNA by duplex DNA, and the ATP-dependent hybridization of homologous single-stranded DNAs. It interacts with LexA causing its activation and leading to its autocatalytic cleavage. The polypeptide is Protein RecA (Streptomyces rimosus).